The following is a 386-amino-acid chain: Bifunctional enzyme IspD/IspF (386 aa).

Residues 1-231 (MKNGAVIIPA…REKKEPMQKI (231 aa)) form a 2-C-methyl-D-erythritol 4-phosphate cytidylyltransferase region. The segment at 232–386 (RIGHGFDAHQ…SCHAVVLLQQ (155 aa)) is 2-C-methyl-D-erythritol 2,4-cyclodiphosphate synthase. The a divalent metal cation site is built by aspartate 238 and histidine 240. Residues 238–240 (DAH) and 264–265 (HS) contribute to the 4-CDP-2-C-methyl-D-erythritol 2-phosphate site. An a divalent metal cation-binding site is contributed by histidine 272. 4-CDP-2-C-methyl-D-erythritol 2-phosphate-binding positions include 286-288 (DIG), 362-365 (TTTE), tyrosine 369, and arginine 372.

The protein in the N-terminal section; belongs to the IspD/TarI cytidylyltransferase family. IspD subfamily. This sequence in the C-terminal section; belongs to the IspF family. The cofactor is a divalent metal cation.

The enzyme catalyses 2-C-methyl-D-erythritol 4-phosphate + CTP + H(+) = 4-CDP-2-C-methyl-D-erythritol + diphosphate. The catalysed reaction is 4-CDP-2-C-methyl-D-erythritol 2-phosphate = 2-C-methyl-D-erythritol 2,4-cyclic diphosphate + CMP. It functions in the pathway isoprenoid biosynthesis; isopentenyl diphosphate biosynthesis via DXP pathway; isopentenyl diphosphate from 1-deoxy-D-xylulose 5-phosphate: step 2/6. The protein operates within isoprenoid biosynthesis; isopentenyl diphosphate biosynthesis via DXP pathway; isopentenyl diphosphate from 1-deoxy-D-xylulose 5-phosphate: step 4/6. Bifunctional enzyme that catalyzes the formation of 4-diphosphocytidyl-2-C-methyl-D-erythritol from CTP and 2-C-methyl-D-erythritol 4-phosphate (MEP) (IspD), and catalyzes the conversion of 4-diphosphocytidyl-2-C-methyl-D-erythritol 2-phosphate (CDP-ME2P) to 2-C-methyl-D-erythritol 2,4-cyclodiphosphate (ME-CPP) with a corresponding release of cytidine 5-monophosphate (CMP) (IspF). This Desulfotalea psychrophila (strain LSv54 / DSM 12343) protein is Bifunctional enzyme IspD/IspF.